The sequence spans 376 residues: 1-acyl-sn-glycerol-3-phosphate acyltransferase gamma (376 aa).

Topologically, residues M1–K124 are cytoplasmic. Residues H96–D101 carry the HXXXXD motif motif. The chain crosses the membrane as a helical span at residues E125–K145. Residues R146–T316 are Lumenal-facing. A helical membrane pass occupies residues I317 to L339. The Cytoplasmic segment spans residues T340–E376.

The protein belongs to the 1-acyl-sn-glycerol-3-phosphate acyltransferase family. Widely expressed with highest levels in testis, pancreas and kidney, followed by spleen, lung, adipose tissue and liver.

It is found in the endoplasmic reticulum membrane. The protein localises to the nucleus envelope. The catalysed reaction is a 1-acyl-sn-glycero-3-phosphate + an acyl-CoA = a 1,2-diacyl-sn-glycero-3-phosphate + CoA. The enzyme catalyses pentadecanoyl-CoA + 1-(9Z-octadecenoyl)-sn-glycero-3-phosphate = 1-(9Z)-octadecenoyl-2-pentadecanoyl-sn-glycero-3-phosphate + CoA. It carries out the reaction heptadecanoyl-CoA + 1-(9Z-octadecenoyl)-sn-glycero-3-phosphate = 1-(9Z)-octadecenoyl-2-heptadecanoyl-sn-glycero-3-phosphate + CoA. It catalyses the reaction 1-(9Z-octadecenoyl)-sn-glycero-3-phosphate + octadecanoyl-CoA = 1-(9Z-octadecenoyl)-2-octadecanoyl-sn-glycero-3-phosphate + CoA. The catalysed reaction is nonadecanoyl-CoA + 1-(9Z-octadecenoyl)-sn-glycero-3-phosphate = 1-(9Z)-octadecenoyl-2-nonadecanoyl-sn-glycero-3-phosphate + CoA. The enzyme catalyses 1-(9Z-octadecenoyl)-sn-glycero-3-phosphate + (5Z,8Z,11Z,14Z)-eicosatetraenoyl-CoA = 1-(9Z)-octadecenoyl-2-(5Z,8Z,11Z,14Z)-eicosatetraenoyl-sn-glycero-3-phosphate + CoA. It carries out the reaction 1-(9Z-octadecenoyl)-sn-glycero-3-phosphate + (9Z)-octadecenoyl-CoA = 1,2-di-(9Z-octadecenoyl)-sn-glycero-3-phosphate + CoA. It catalyses the reaction 1-(9Z-octadecenoyl)-sn-glycero-3-phosphate + (9Z,12Z)-octadecadienoyl-CoA = 1-(9Z)-octadecenoyl-2-(9Z,12Z)-octadecadienoyl-sn-glycero-3-phosphate + CoA. The catalysed reaction is 1-(9Z-octadecenoyl)-sn-glycero-3-phosphocholine + (5Z,8Z,11Z,14Z)-eicosatetraenoyl-CoA = 1-(9Z)-octadecenoyl-2-(5Z,8Z,11Z,14Z)-icosatetraenoyl-sn-glycero-3-phosphocholine + CoA. The enzyme catalyses 1-(9Z-octadecenoyl)-sn-glycero-3-phospho-(1D-myo-inositol) + (5Z,8Z,11Z,14Z)-eicosatetraenoyl-CoA = 1-(9Z-octadecenoyl)-2-(5Z,8Z,11Z,14Z-eicosatetraenoyl)-sn-glycero-3-phospho-1D-myo-inositol + CoA. It carries out the reaction 1-(9Z-octadecenoyl)-sn-glycero-3-phospho-L-serine + (5Z,8Z,11Z,14Z)-eicosatetraenoyl-CoA = 1-(9Z-octadecenoyl)-2-(5Z,8Z,11Z,14Z-eicosatetraenoyl)-sn-glycero-3-phospho-L-serine + CoA. It catalyses the reaction 1-hexadecanoyl-sn-glycero-3-phosphate + (9Z)-octadecenoyl-CoA = 1-hexadecanoyl-2-(9Z-octadecenoyl)-sn-glycero-3-phosphate + CoA. The catalysed reaction is 1-hexadecanoyl-sn-glycero-3-phosphate + (5Z,8Z,11Z,14Z)-eicosatetraenoyl-CoA = 1-hexadecanoyl-2-(5Z,8Z,11Z,14Z-eicosatetraenoyl)-sn-glycero-3-phosphate + CoA. The enzyme catalyses 1-heptadecanoyl-sn-glycero-3-phosphate + (5Z,8Z,11Z,14Z)-eicosatetraenoyl-CoA = 1-heptadecanoyl-2-(5Z,8Z,11Z,14Z)-eicosatetraenoyl-sn-glycero-3-phosphate + CoA. It carries out the reaction 1-octadecanoyl-sn-glycero-3-phosphate + (9Z)-octadecenoyl-CoA = 1-octadecanoyl-2-(9Z-octadecenoyl)-sn-glycero-3-phosphate + CoA. It catalyses the reaction 1-octadecanoyl-sn-glycero-3-phosphate + (5Z,8Z,11Z,14Z)-eicosatetraenoyl-CoA = 1-octadecanoyl-2-(5Z,8Z,11Z,14Z-eicosatetraenoyl)-sn-glycero-3-phosphate + CoA. The catalysed reaction is 1-(9Z-octadecenoyl)-sn-glycero-3-phosphate + hexadecanoyl-CoA = 1-hexadecanoyl-2-(9Z-octadecenoyl)-sn-glycero-3-phosphate + CoA. The enzyme catalyses 1-O-(9Z-octadecenyl)-sn-glycero-3-phosphate + (5Z,8Z,11Z,14Z)-eicosatetraenoyl-CoA = 1-O-(9Z-octadecenyl)-2-(5Z,8Z,11Z,14Z-eicosatetraenoyl)-sn-glycero-3-phosphate + CoA. It carries out the reaction a 1-acyl-sn-glycero-3-phospho-(1D-myo-inositol) + (5Z,8Z,11Z,14Z)-eicosatetraenoyl-CoA = a 1-acyl-2-(5Z,8Z,11Z,14Z-eicosatetraenoyl)-sn-glycero-3-phospho-(1D-myo-inositol) + CoA. It functions in the pathway phospholipid metabolism; CDP-diacylglycerol biosynthesis; CDP-diacylglycerol from sn-glycerol 3-phosphate: step 2/3. Converts 1-acyl-sn-glycerol-3-phosphate (lysophosphatidic acid or LPA) into 1,2-diacyl-sn-glycerol-3-phosphate (phosphatidic acid or PA) by incorporating an acyl moiety at the sn-2 position of the glycerol backbone. Acts on LPA containing saturated or unsaturated fatty acids C16:0-C20:4 at the sn-1 position using C18:1, C20:4 or C18:2-CoA as the acyl donor. Also acts on lysophosphatidylcholine, lysophosphatidylinositol and lysophosphatidylserine using C18:1 or C20:4-CoA. Has a preference for arachidonoyl-CoA as a donor. Also has a modest lysophosphatidylinositol acyltransferase (LPIAT) activity, converts lysophosphatidylinositol (LPI) into phosphatidylinositol. This Homo sapiens (Human) protein is 1-acyl-sn-glycerol-3-phosphate acyltransferase gamma (AGPAT3).